The primary structure comprises 296 residues: GTPase Era (296 aa).

In terms of domain architecture, Era-type G spans 3–170 (KSGFVTIVGR…KELMFKYIPE (168 aa)). Residues 11–18 (GRPNVGKS) are G1. 11–18 (GRPNVGKS) contacts GTP. A G2 region spans residues 37–41 (QTTRN). The segment at 58-61 (DTPG) is G3. GTP-binding positions include 58–62 (DTPGI) and 120–123 (NKID). A G4 region spans residues 120–123 (NKID). Residues 149–151 (ISA) form a G5 region. In terms of domain architecture, KH type-2 spans 201-278 (LSEEVPHGIA…YIRLWVKVKE (78 aa)).

The protein belongs to the TRAFAC class TrmE-Era-EngA-EngB-Septin-like GTPase superfamily. Era GTPase family. In terms of assembly, monomer.

Its subcellular location is the cytoplasm. The protein localises to the cell membrane. In terms of biological role, an essential GTPase that binds both GDP and GTP, with rapid nucleotide exchange. Plays a role in 16S rRNA processing and 30S ribosomal subunit biogenesis and possibly also in cell cycle regulation and energy metabolism. This chain is GTPase Era, found in Clostridium botulinum (strain Loch Maree / Type A3).